Consider the following 249-residue polypeptide: Nicotinamide/nicotinic acid mononucleotide adenylyltransferase (249 aa).

NAD(+)-binding residues include serine 34 and phenylalanine 35. ATP-binding residues include histidine 42 and lysine 75. NAD(+)-binding residues include threonine 112, glycine 141, aspartate 143, tryptophan 154, arginine 173, and asparagine 204. Position 209 to 210 (209 to 210 (SR)) interacts with ATP.

This sequence belongs to the eukaryotic NMN adenylyltransferase family. A divalent metal cation serves as cofactor.

It carries out the reaction beta-nicotinamide D-ribonucleotide + ATP + H(+) = diphosphate + NAD(+). It catalyses the reaction nicotinate beta-D-ribonucleotide + ATP + H(+) = deamido-NAD(+) + diphosphate. It participates in cofactor biosynthesis; NAD(+) biosynthesis; deamido-NAD(+) from nicotinate D-ribonucleotide: step 1/1. The protein operates within cofactor biosynthesis; NAD(+) biosynthesis; NAD(+) from nicotinamide D-ribonucleotide: step 1/1. In terms of biological role, catalyzes the formation of NAD(+) from nicotinamide mononucleotide (NMN) and ATP. Can also use the deamidated form; nicotinic acid mononucleotide (NaMN) as substrate. This is Nicotinamide/nicotinic acid mononucleotide adenylyltransferase from Oryza sativa subsp. japonica (Rice).